We begin with the raw amino-acid sequence, 97 residues long: Co-chaperonin GroES (97 aa).

It belongs to the GroES chaperonin family. As to quaternary structure, heptamer of 7 subunits arranged in a ring. Interacts with the chaperonin GroEL.

The protein localises to the cytoplasm. Functionally, together with the chaperonin GroEL, plays an essential role in assisting protein folding. The GroEL-GroES system forms a nano-cage that allows encapsulation of the non-native substrate proteins and provides a physical environment optimized to promote and accelerate protein folding. GroES binds to the apical surface of the GroEL ring, thereby capping the opening of the GroEL channel. This is Co-chaperonin GroES from Buchnera aphidicola subsp. Pemphigus spyrothecae.